The chain runs to 417 residues: Serine hydroxymethyltransferase (417 aa).

Residues Leu-121 and Gly-125 to Leu-127 contribute to the (6S)-5,6,7,8-tetrahydrofolate site. Position 229 is an N6-(pyridoxal phosphate)lysine (Lys-229). Ser-355–Phe-357 provides a ligand contact to (6S)-5,6,7,8-tetrahydrofolate.

The protein belongs to the SHMT family. Homodimer. Requires pyridoxal 5'-phosphate as cofactor.

The protein localises to the cytoplasm. The catalysed reaction is (6R)-5,10-methylene-5,6,7,8-tetrahydrofolate + glycine + H2O = (6S)-5,6,7,8-tetrahydrofolate + L-serine. It participates in one-carbon metabolism; tetrahydrofolate interconversion. Its pathway is amino-acid biosynthesis; glycine biosynthesis; glycine from L-serine: step 1/1. In terms of biological role, catalyzes the reversible interconversion of serine and glycine with tetrahydrofolate (THF) serving as the one-carbon carrier. This reaction serves as the major source of one-carbon groups required for the biosynthesis of purines, thymidylate, methionine, and other important biomolecules. Also exhibits THF-independent aldolase activity toward beta-hydroxyamino acids, producing glycine and aldehydes, via a retro-aldol mechanism. The sequence is that of Serine hydroxymethyltransferase from Stenotrophomonas maltophilia (strain K279a).